The chain runs to 169 residues: T-cell receptor gamma chain C region DFL12 (169 aa).

Residues 1 to 136 are c region; it reads PSDKRLDADI…LQFMSTSAYY (136 aa). A helical transmembrane segment spans residues 137 to 157; that stretch reads TYLLLLLKSVIYLAIISFSLL. Residues 158–169 are Cytoplasmic-facing; that stretch reads RRTSVCCNEKRS.

It is found in the membrane. This Mus musculus (Mouse) protein is T-cell receptor gamma chain C region DFL12.